The primary structure comprises 881 residues: MDTAEIRSRFLNHFARRGHTVVPSASLVAQDPTLLLVNAGMVPFKPYFLGDLPAPWPRAASVQKCVRTVDIENVGHTARHASFFQMCGNFSFGDYFKAEAIPFAFELLTEGFGFKADDLWATVYLDDDEAEGIWRKLLPAERIQRRGKEDNFWSMGVPGPCGPCSEIYFDRGCAYGREGGPIADEERYLEVWNLVFMQYERGEGAGYDYPIERELPARNIDTGMGLERMATILQGVDNLYEIDISRPVLDAAGRLTGRRYGADPADDVRLRVIADHTRTAAMLISDGVVPSNEGRGYVLRRMLRRAIRNARLLGAHEPVMSELFAVVGSAMGTIYPELLDNAETITGVAVAEEQAFAETLRTGTTIFDTAARQARSLGSTTLGGEAAFKLHDTYGFPIDLTLEMAAEAGLSVDEAGFRRLMDRQRQAAKADRAARRIGNVDLSAFRPILARSGPTTFTGYEELSRTSGVVGLVGIADGAGLAAAGEDTEVGVVLDATPFYAESGGQEPDLGRLRFDGGEVEVLDVQRPVPDLVLHRVRVLGGELRLGVEVFAEVDADRRRAVSRSHTATHLVHTAFRRALGEGATQAGSLNSPGRLRFDFHALGAVPPSVLADVEDEINEVALRDLPVRAFVTTQEEARRLGAMALFGEKYGDAVRVVDVGDYARELCGGTHVASSAQLGAVKLLSEASISAGTRRVEGLVGLDAFRYLAREHLLVSQLSTALKARPDELVDRVTDIVGRLRDAERELERLRAAAVLAGAGALAEGAEEVAGVAVVTAEVPAGTAPDDVRLLALDVRGRLAGRPAVVAVAKADGSSIVVVTDDAARGRGLRAGDLVRQSWASLGGKGGGKPDVAQGGGGNPQLVPAVFARLRGLVAEHASR.

Residues His-566, His-570, Cys-668, and His-672 each contribute to the Zn(2+) site.

The protein belongs to the class-II aminoacyl-tRNA synthetase family. Zn(2+) is required as a cofactor.

It localises to the cytoplasm. It catalyses the reaction tRNA(Ala) + L-alanine + ATP = L-alanyl-tRNA(Ala) + AMP + diphosphate. Functionally, catalyzes the attachment of alanine to tRNA(Ala) in a two-step reaction: alanine is first activated by ATP to form Ala-AMP and then transferred to the acceptor end of tRNA(Ala). Also edits incorrectly charged Ser-tRNA(Ala) and Gly-tRNA(Ala) via its editing domain. This chain is Alanine--tRNA ligase, found in Frankia casuarinae (strain DSM 45818 / CECT 9043 / HFP020203 / CcI3).